A 96-amino-acid polypeptide reads, in one-letter code: Large ribosomal subunit protein bL28 (96 aa).

Residues 1–22 (MSRRCELTGKGPMTGNNVSHAN) are disordered.

This sequence belongs to the bacterial ribosomal protein bL28 family.

The chain is Large ribosomal subunit protein bL28 from Ruegeria sp. (strain TM1040) (Silicibacter sp.).